A 298-amino-acid polypeptide reads, in one-letter code: PYK10-binding protein 1 (298 aa).

Alanine 2 is subject to N-acetylalanine. Jacalin-type lectin domains are found at residues alanine 2–proline 142 and alanine 152–proline 295. Serine 20 carries the post-translational modification Phosphoserine.

This sequence belongs to the jacalin lectin family. In terms of assembly, component of the PYK10 complex, at least composed of PYK10/BGLU23, BGLU21, BGLU22, JAL22, JAL23, PBP1/JAL30, PBP2/JAL31, JAL32, JAL33, JAL34, JAL35, GLL22 and GLL23. Expressed exclusively in roots.

Its subcellular location is the cytoplasm. Inhibitor-type lectin that may regulate the correct polymerization of BGLU23/PYK10 upon tissue damage. Activates BGLU21, BGLU22 and BGLU23. The protein is PYK10-binding protein 1 (PBP1) of Arabidopsis thaliana (Mouse-ear cress).